The following is a 433-amino-acid chain: uncharacterized protein (433 aa).

The signal sequence occupies residues 1-26; it reads MTRRAEFEMGLFVILQSMFLISLCSS. N-linked (GlcNAc...) asparagine glycans are attached at residues Asn-59, Asn-72, Asn-125, Asn-159, Asn-210, Asn-275, Asn-282, and Asn-323. Ala-405 carries GPI-anchor amidated alanine lipidation. Positions 406–433 are cleaved as a propeptide — removed in mature form; that stretch reads SSQPRLHDEGVTRLVIFVLSMLLVMLLS.

Its subcellular location is the cell membrane. This is an uncharacterized protein from Arabidopsis thaliana (Mouse-ear cress).